The sequence spans 160 residues: Urease accessory protein UreE (160 aa).

This sequence belongs to the UreE family.

The protein resides in the cytoplasm. Its function is as follows. Involved in urease metallocenter assembly. Binds nickel. Probably functions as a nickel donor during metallocenter assembly. This chain is Urease accessory protein UreE, found in Acinetobacter baumannii (strain ACICU).